Reading from the N-terminus, the 358-residue chain is Uroporphyrinogen decarboxylase (358 aa).

Substrate contacts are provided by residues 29–33 (RQAGR), F48, D79, Y155, S210, and H330.

It belongs to the uroporphyrinogen decarboxylase family. Homodimer.

Its subcellular location is the cytoplasm. The catalysed reaction is uroporphyrinogen III + 4 H(+) = coproporphyrinogen III + 4 CO2. It participates in porphyrin-containing compound metabolism; protoporphyrin-IX biosynthesis; coproporphyrinogen-III from 5-aminolevulinate: step 4/4. Functionally, catalyzes the decarboxylation of four acetate groups of uroporphyrinogen-III to yield coproporphyrinogen-III. This Bordetella pertussis (strain Tohama I / ATCC BAA-589 / NCTC 13251) protein is Uroporphyrinogen decarboxylase.